The chain runs to 549 residues: Probable protein kinase UbiB (549 aa).

The region spanning aspartate 123–leucine 501 is the Protein kinase domain. ATP is bound by residues leucine 129–valine 137 and lysine 152. The active-site Proton acceptor is the aspartate 287. 2 helical membrane-spanning segments follow: residues serine 498–glutamine 518 and alanine 520–tryptophan 540.

This sequence belongs to the ABC1 family. UbiB subfamily.

Its subcellular location is the cell inner membrane. It functions in the pathway cofactor biosynthesis; ubiquinone biosynthesis [regulation]. Is probably a protein kinase regulator of UbiI activity which is involved in aerobic coenzyme Q (ubiquinone) biosynthesis. In Shewanella sp. (strain MR-7), this protein is Probable protein kinase UbiB.